Reading from the N-terminus, the 32-residue chain is Protamine-2 (32 aa).

Positions 1-32 are disordered; the sequence is PRRRRSSSRPVRRRRARRVSRRRRRRGGRRRR.

Testis.

It is found in the nucleus. It localises to the chromosome. Its function is as follows. Protamines substitute for histones in the chromatin of sperm during the haploid phase of spermatogenesis. They compact sperm DNA into a highly condensed, stable and inactive complex. The chain is Protamine-2 from Oncorhynchus mykiss (Rainbow trout).